Here is a 329-residue protein sequence, read N- to C-terminus: Acetoacetyl CoA synthase NphT7 (329 aa).

Catalysis depends on residues Cys-115, His-256, and Asn-286.

It belongs to the thiolase-like superfamily. FabH family. In terms of assembly, homodimer.

The protein localises to the cytoplasm. It catalyses the reaction malonyl-CoA + acetyl-CoA + H(+) = acetoacetyl-CoA + CO2 + CoA. It functions in the pathway metabolic intermediate biosynthesis; (R)-mevalonate biosynthesis. Catalyzes the condensation of acetyl-CoA and malonyl-CoA to form acetoacetyl-CoA and CoA. Does not accept malonyl-[acyl-carrier-protein] as a substrate. Can also convert malonyl-CoA into acetyl-CoA via decarboxylation of malonyl-CoA. This Streptomyces sp. (strain CL190) protein is Acetoacetyl CoA synthase NphT7 (nphT7).